The sequence spans 423 residues: D-tagatose-1,6-bisphosphate aldolase subunit GatZ (423 aa).

The protein belongs to the GatZ/KbaZ family. GatZ subfamily. In terms of assembly, forms a complex with GatY.

The protein operates within carbohydrate metabolism; D-tagatose 6-phosphate degradation; D-glyceraldehyde 3-phosphate and glycerone phosphate from D-tagatose 6-phosphate: step 2/2. Functionally, component of the tagatose-1,6-bisphosphate aldolase GatYZ that is required for full activity and stability of the Y subunit. Could have a chaperone-like function for the proper and stable folding of GatY. When expressed alone, GatZ does not show any aldolase activity. Is involved in the catabolism of galactitol. This is D-tagatose-1,6-bisphosphate aldolase subunit GatZ from Salmonella paratyphi B (strain ATCC BAA-1250 / SPB7).